The primary structure comprises 269 residues: Formamidopyrimidine-DNA glycosylase (269 aa).

The active-site Schiff-base intermediate with DNA is proline 2. Residue glutamate 3 is the Proton donor of the active site. The Proton donor; for beta-elimination activity role is filled by lysine 57. Positions 90, 109, and 150 each coordinate DNA. An FPG-type zinc finger spans residues 235–269; sequence QVYGRKGEPCRVCGTPIVATKHAQRATFYCRQCQK. The active-site Proton donor; for delta-elimination activity is the arginine 259.

It belongs to the FPG family. Monomer. Zn(2+) is required as a cofactor.

It catalyses the reaction Hydrolysis of DNA containing ring-opened 7-methylguanine residues, releasing 2,6-diamino-4-hydroxy-5-(N-methyl)formamidopyrimidine.. The catalysed reaction is 2'-deoxyribonucleotide-(2'-deoxyribose 5'-phosphate)-2'-deoxyribonucleotide-DNA = a 3'-end 2'-deoxyribonucleotide-(2,3-dehydro-2,3-deoxyribose 5'-phosphate)-DNA + a 5'-end 5'-phospho-2'-deoxyribonucleoside-DNA + H(+). In terms of biological role, involved in base excision repair of DNA damaged by oxidation or by mutagenic agents. Acts as a DNA glycosylase that recognizes and removes damaged bases. Has a preference for oxidized purines, such as 7,8-dihydro-8-oxoguanine (8-oxoG). Has AP (apurinic/apyrimidinic) lyase activity and introduces nicks in the DNA strand. Cleaves the DNA backbone by beta-delta elimination to generate a single-strand break at the site of the removed base with both 3'- and 5'-phosphates. The protein is Formamidopyrimidine-DNA glycosylase of Escherichia coli O7:K1 (strain IAI39 / ExPEC).